Here is a 247-residue protein sequence, read N- to C-terminus: tRNA pseudouridine synthase A (247 aa).

Asp52 (nucleophile) is an active-site residue. Residue Tyr113 participates in substrate binding.

Belongs to the tRNA pseudouridine synthase TruA family. As to quaternary structure, homodimer.

The catalysed reaction is uridine(38/39/40) in tRNA = pseudouridine(38/39/40) in tRNA. Functionally, formation of pseudouridine at positions 38, 39 and 40 in the anticodon stem and loop of transfer RNAs. In Bartonella quintana (strain Toulouse) (Rochalimaea quintana), this protein is tRNA pseudouridine synthase A.